A 28-amino-acid chain; its full sequence is Humanin-like 2 (28 aa).

It belongs to the humanin family. In terms of tissue distribution, highly expressed in testis. Also expressed in kidney, heart, skeletal muscles and brain.

Its subcellular location is the secreted. The protein localises to the cytoplasm. In terms of biological role, plays a role as a neuroprotective and antiapoptotic factor. The polypeptide is Humanin-like 2 (Homo sapiens (Human)).